We begin with the raw amino-acid sequence, 163 residues long: NADH-quinone oxidoreductase subunit I (163 aa).

2 4Fe-4S ferredoxin-type domains span residues 53–83 (LRRY…IEAG) and 94–123 (VRYD…EGPN). The [4Fe-4S] cluster site is built by Cys-63, Cys-66, Cys-69, Cys-73, Cys-103, Cys-106, Cys-109, and Cys-113.

It belongs to the complex I 23 kDa subunit family. In terms of assembly, NDH-1 is composed of 14 different subunits. Subunits NuoA, H, J, K, L, M, N constitute the membrane sector of the complex. It depends on [4Fe-4S] cluster as a cofactor.

The protein localises to the cell inner membrane. It carries out the reaction a quinone + NADH + 5 H(+)(in) = a quinol + NAD(+) + 4 H(+)(out). Functionally, NDH-1 shuttles electrons from NADH, via FMN and iron-sulfur (Fe-S) centers, to quinones in the respiratory chain. The immediate electron acceptor for the enzyme in this species is believed to be ubiquinone. Couples the redox reaction to proton translocation (for every two electrons transferred, four hydrogen ions are translocated across the cytoplasmic membrane), and thus conserves the redox energy in a proton gradient. The sequence is that of NADH-quinone oxidoreductase subunit I from Allorhizobium ampelinum (strain ATCC BAA-846 / DSM 112012 / S4) (Agrobacterium vitis (strain S4)).